We begin with the raw amino-acid sequence, 215 residues long: Pyridoxine/pyridoxamine 5'-phosphate oxidase (215 aa).

Residues 9–12 and lysine 69 contribute to the substrate site; that span reads RRDY. Residues 64–69, 79–80, lysine 86, and glutamine 108 each bind FMN; these read RVLLLK and FT. Substrate-binding residues include tyrosine 126, arginine 130, and serine 134. FMN is bound by residues 143–144 and tryptophan 188; that span reads QS. Substrate is bound at residue 194–196; it reads RLH. Arginine 198 serves as a coordination point for FMN.

Belongs to the pyridoxamine 5'-phosphate oxidase family. In terms of assembly, homodimer. The cofactor is FMN.

The catalysed reaction is pyridoxamine 5'-phosphate + O2 + H2O = pyridoxal 5'-phosphate + H2O2 + NH4(+). It catalyses the reaction pyridoxine 5'-phosphate + O2 = pyridoxal 5'-phosphate + H2O2. It functions in the pathway cofactor metabolism; pyridoxal 5'-phosphate salvage; pyridoxal 5'-phosphate from pyridoxamine 5'-phosphate: step 1/1. Its pathway is cofactor metabolism; pyridoxal 5'-phosphate salvage; pyridoxal 5'-phosphate from pyridoxine 5'-phosphate: step 1/1. In terms of biological role, catalyzes the oxidation of either pyridoxine 5'-phosphate (PNP) or pyridoxamine 5'-phosphate (PMP) into pyridoxal 5'-phosphate (PLP). This chain is Pyridoxine/pyridoxamine 5'-phosphate oxidase, found in Pseudomonas savastanoi pv. phaseolicola (strain 1448A / Race 6) (Pseudomonas syringae pv. phaseolicola (strain 1448A / Race 6)).